The primary structure comprises 674 residues: MSVKDEINKLIETINYHNERYYNQDSPEISDYEYDKLMKELISLEEEHPELKRIDSPTNRVGGKPLDKFNQIVHKTPMLSLSNAFSEQDLRDFDKRVQEYVGENVEYVVEFKIDGLSVGLTYNNGEFEKGATRGDGVVGEDISQNLMTVKSIPLKINDKKELIVRGEVYISKDNFRKVNEQQEEQEQPLFANPRNLAAGSLRQLDPKLTAKRPLDIFVFNMENIEEYDLESHSESLEYLEKLGFSVSQSYKVCKSIDEVIEHIEYWTDNRGNLDYEIDGMVIKVNNIKQRDEMGYTAKSPRWAIAYKFPAEKKKTKIVDIIVEVGRTGTITPSAILEPVRLAGTTVSRATLHNEDYIREKDIKINDTVLVQKAGDIIPQVLEVIKEERTGDEIDFKMPEKCPVCSEPTIRLEGEAAVKCINMSCPAQIRRGIIHFVSRDAMNIDGLGESIITLLLNEKIIQDVSDLYYIKKEDVVDLERMGEKSADNLINSIEKSKENDLWRLINGLGIKFIGVKAAKILAYNFKDLDEVISATSEQLEELEEFGSIMANSVVEFFKEDKNMNVINKLKNVGVNTKSLDNTGEKVEKIFEGMKIVLTGTLPTLKRNDAKEMIEKRGGKATSSVSKSTTFVLAGEEAGSKLTKANDLGIKVIDEERFLELLKLSSKDEVKAVLES.

NAD(+) is bound by residues 31-35, 80-81, and Glu110; these read DYEYD and SL. The N6-AMP-lysine intermediate role is filled by Lys112. NAD(+)-binding residues include Arg133, Glu167, Lys283, and Lys307. Zn(2+) is bound by residues Cys401, Cys404, Cys419, and Cys424. One can recognise a BRCT domain in the interval 584–673; that stretch reads KVEKIFEGMK…SKDEVKAVLE (90 aa).

The protein belongs to the NAD-dependent DNA ligase family. LigA subfamily. The cofactor is Mg(2+). It depends on Mn(2+) as a cofactor.

The catalysed reaction is NAD(+) + (deoxyribonucleotide)n-3'-hydroxyl + 5'-phospho-(deoxyribonucleotide)m = (deoxyribonucleotide)n+m + AMP + beta-nicotinamide D-nucleotide.. In terms of biological role, DNA ligase that catalyzes the formation of phosphodiester linkages between 5'-phosphoryl and 3'-hydroxyl groups in double-stranded DNA using NAD as a coenzyme and as the energy source for the reaction. It is essential for DNA replication and repair of damaged DNA. The chain is DNA ligase from Clostridioides difficile (strain 630) (Peptoclostridium difficile).